The sequence spans 538 residues: Putative cysteine ligase BshC (538 aa).

Positions 460–484 (KINEQIELLERMLKRNVEKKHEVEL) form a coiled coil.

Belongs to the BshC family.

Involved in bacillithiol (BSH) biosynthesis. May catalyze the last step of the pathway, the addition of cysteine to glucosamine malate (GlcN-Mal) to generate BSH. The chain is Putative cysteine ligase BshC from Bacillus cereus (strain ATCC 10987 / NRS 248).